A 347-amino-acid polypeptide reads, in one-letter code: D-alanine--D-alanine ligase (347 aa).

In terms of domain architecture, ATP-grasp spans 138–339 (KILCSHAGIP…YSQVIETILA (202 aa)). 171-226 (SDRFTFPLFVKPVDAGSSFGCTFVDFFEQLPVAIEHALQHGKSAIVEPALDAPEVF) is an ATP binding site. 3 residues coordinate Mg(2+): Asp-296, Glu-308, and Asn-310.

This sequence belongs to the D-alanine--D-alanine ligase family. The cofactor is Mg(2+). Mn(2+) serves as cofactor.

It localises to the cytoplasm. It catalyses the reaction 2 D-alanine + ATP = D-alanyl-D-alanine + ADP + phosphate + H(+). It functions in the pathway cell wall biogenesis; peptidoglycan biosynthesis. Its function is as follows. Cell wall formation. This Tropheryma whipplei (strain TW08/27) (Whipple's bacillus) protein is D-alanine--D-alanine ligase.